Consider the following 744-residue polypeptide: Adenosylcobalamin-dependent ribonucleoside-triphosphate reductase (744 aa).

A disulfide bridge links Cys120 with Cys424. Residues 148-159 are effector region-1; the sequence is SMPFSFLFDQLM. The segment at 169 to 318 is effector region-2; that stretch reads VDENINQIPK…ICNLIGKTVV (150 aa). Residues Cys413 and Glu415 contribute to the active site. Positions 570–631 are adenosylcobalamin-binding-1; the sequence is FHYSGYLIQR…SDNFASAGTV (62 aa). Residues 690–729 form an adenosylcobalamin-binding-2 region; it reads LKQAPKEPISKEKYEKADNHITGNVEIVFEQTNEDQKGLE.

It belongs to the class II ribonucleoside-triphosphate reductase family. As to quaternary structure, monomer. Requires adenosylcob(III)alamin as cofactor.

The catalysed reaction is a 2'-deoxyribonucleoside 5'-triphosphate + [thioredoxin]-disulfide + H2O = a ribonucleoside 5'-triphosphate + [thioredoxin]-dithiol. Allosterically regulated by ATP and dNTP. The polypeptide is Adenosylcobalamin-dependent ribonucleoside-triphosphate reductase (rtpR) (Lactobacillus gasseri (strain ATCC 33323 / DSM 20243 / BCRC 14619 / CIP 102991 / JCM 1131 / KCTC 3163 / NCIMB 11718 / NCTC 13722 / AM63)).